The primary structure comprises 229 residues: Transcriptional regulatory protein YxdJ (229 aa).

Residues 3–116 (KIMIVEDSED…IVLAKIKSQI (114 aa)) form the Response regulatory domain. Residue D52 is modified to 4-aspartylphosphate. A DNA-binding region (ompR/PhoB-type) is located at residues 129–227 (EKVVEYAGVQ…VRGEGYQLRA (99 aa)).

In terms of processing, phosphorylated by YxdK.

It localises to the cytoplasm. Functionally, probable member of the two-component regulatory system YxdK/YxdJ. Positively regulates the expression of the yxdLMyxeA operon by direct interaction with its promoter region. Could also indirectly regulate the expression of the dlt operon. This chain is Transcriptional regulatory protein YxdJ (yxdJ), found in Bacillus subtilis (strain 168).